The chain runs to 481 residues: 3-ketoacyl-CoA synthase 8 (481 aa).

2 helical membrane-spanning segments follow: residues 4-24 (LKMVFFKILFISLMAGLAMKG) and 44-64 (LQTISLLLFLVVFVWILYMLT). Residues 61-358 (YMLTRPKPVY…FFITFVKKKY (298 aa)) enclose the FAE domain. Active-site residues include C213, H292, H376, H380, H409, and N413.

This sequence belongs to the thiolase-like superfamily. Chalcone/stilbene synthases family. As to expression, expressed in leaves and seedlings.

The protein resides in the endoplasmic reticulum membrane. The enzyme catalyses a very-long-chain acyl-CoA + malonyl-CoA + H(+) = a very-long-chain 3-oxoacyl-CoA + CO2 + CoA. Its pathway is lipid metabolism; fatty acid biosynthesis. This is 3-ketoacyl-CoA synthase 8 from Arabidopsis thaliana (Mouse-ear cress).